A 276-amino-acid polypeptide reads, in one-letter code: 2-dehydro-3-deoxyphosphooctonate aldolase (276 aa).

This sequence belongs to the KdsA family.

It is found in the cytoplasm. The enzyme catalyses D-arabinose 5-phosphate + phosphoenolpyruvate + H2O = 3-deoxy-alpha-D-manno-2-octulosonate-8-phosphate + phosphate. Its pathway is carbohydrate biosynthesis; 3-deoxy-D-manno-octulosonate biosynthesis; 3-deoxy-D-manno-octulosonate from D-ribulose 5-phosphate: step 2/3. The protein operates within bacterial outer membrane biogenesis; lipopolysaccharide biosynthesis. The polypeptide is 2-dehydro-3-deoxyphosphooctonate aldolase (Xanthomonas axonopodis pv. citri (strain 306)).